We begin with the raw amino-acid sequence, 648 residues long: Bifunctional protein TilS/HprT (648 aa).

Residue 29–34 (SGGPDS) participates in ATP binding. Residue Asp-627 coordinates Mg(2+).

It in the N-terminal section; belongs to the tRNA(Ile)-lysidine synthase family. The protein in the C-terminal section; belongs to the purine/pyrimidine phosphoribosyltransferase family. Mg(2+) is required as a cofactor.

It is found in the cytoplasm. It carries out the reaction IMP + diphosphate = hypoxanthine + 5-phospho-alpha-D-ribose 1-diphosphate. The enzyme catalyses GMP + diphosphate = guanine + 5-phospho-alpha-D-ribose 1-diphosphate. It catalyses the reaction cytidine(34) in tRNA(Ile2) + L-lysine + ATP = lysidine(34) in tRNA(Ile2) + AMP + diphosphate + H(+). Ligates lysine onto the cytidine present at position 34 of the AUA codon-specific tRNA(Ile) that contains the anticodon CAU, in an ATP-dependent manner. Cytidine is converted to lysidine, thus changing the amino acid specificity of the tRNA from methionine to isoleucine. This chain is Bifunctional protein TilS/HprT (tilS/hprT), found in Listeria monocytogenes serotype 4b (strain F2365).